The primary structure comprises 1154 residues: Spike glycoprotein (1154 aa).

The first 18 residues, 1–18, serve as a signal peptide directing secretion; it reads MLERSLLLATLLSALCSA. Residues 19–1096 lie on the Extracellular side of the membrane; that stretch reads NLFGNNSYVY…LKTYIKWPWY (1078 aa). Asn-23, Asn-74, Asn-102, Asn-139, Asn-145, Asn-164, Asn-179, Asn-213, Asn-238, Asn-248, Asn-265, Asn-272, Asn-277, Asn-307, Asn-426, Asn-448, Asn-514, Asn-531, Asn-543, Asn-580, Asn-592, Asn-670, and Asn-677 each carry an N-linked (GlcNAc...) asparagine; by host glycan. Residues 770–875 are heptad repeat 1 (HR1); sequence IPFATQLQAR…QVDRIITGRL (106 aa). Positions 823 to 867 form a coiled coil; that stretch reads QDVVNKQSSILTETMASLNKNFGAISSVLQDIYQQLDSIQADAQV. N-linked (GlcNAc...) asparagine; by host glycans are attached at residues Asn-948, Asn-961, Asn-980, Asn-1015, Asn-1039, Asn-1052, and Asn-1075. The segment at 1025-1106 is heptad repeat 2 (HR2); sequence NDDFDFDDEL…VWLAIAFATI (82 aa). A coiled-coil region spans residues 1056 to 1084; sequence PILDIGSEIDRIQGVIQGLNDSLIDLETL. Residues 1097-1117 traverse the membrane as a helical segment; sequence VWLAIAFATIIFILILGWLFF. The Cytoplasmic portion of the chain corresponds to 1118–1154; it reads MTGCCGCCCGCFGIIPLMSKCGKKSSYYTTFDNDVVT.

This sequence belongs to the gammacoronaviruses spike protein family. As to quaternary structure, homotrimer; each monomer consists of a S1 and a S2 subunit. The resulting peplomers protrude from the virus surface as spikes. Post-translationally, specific enzymatic cleavages in vivo yield mature proteins. The precursor is processed into S1 and S2 by host cell furin or furin-like protease to yield the mature S1 and S2 proteins. The cleavage site between S1 and S2 requires the optimal sequence [KR]-X-[KR]-R. Additionally, a second cleavage leads to the release of a fusion peptide after viral attachment to host cell receptor.

The protein localises to the virion membrane. It is found in the host endoplasmic reticulum-Golgi intermediate compartment membrane. In terms of biological role, attaches the virion to the host cell membrane by interacting with sialic acids, initiating the infection. Its function is as follows. Mediates fusion of the virion and cellular membranes by acting as a class I viral fusion protein. Under the current model, the protein has at least 3 conformational states: pre-fusion native state, pre-hairpin intermediate state, and post-fusion hairpin state. During viral and target cell membrane fusion, the coiled coil regions (heptad repeats) assume a trimer-of-hairpins structure, positioning the fusion peptide in close proximity to the C-terminal region of the ectodomain. The formation of this structure appears to drive apposition and subsequent fusion of viral and target cell membranes. Functionally, acts as a viral fusion peptide after S2 cleavage occurring upon virus endocytosis. The protein is Spike glycoprotein of Gallus gallus (Chicken).